Reading from the N-terminus, the 189-residue chain is Recombination protein RecR (189 aa).

Residues 48 to 63 (CQTCFHLSAEPLCDIC) form a C4-type zinc finger. The Toprim domain occupies 71–165 (QLLCVVADSR…QVSRIAYGLP (95 aa)).

This sequence belongs to the RecR family.

Its function is as follows. May play a role in DNA repair. It seems to be involved in an RecBC-independent recombinational process of DNA repair. It may act with RecF and RecO. The polypeptide is Recombination protein RecR (Prochlorococcus marinus (strain MIT 9313)).